Here is a 389-residue protein sequence, read N- to C-terminus: uncharacterized protein (389 aa).

A signal peptide spans 1–23; sequence MHFAKLGAIGLLGSIICAYAASA.

It belongs to the IUNH family.

Its subcellular location is the endoplasmic reticulum lumen. This is an uncharacterized protein from Schizosaccharomyces pombe (strain 972 / ATCC 24843) (Fission yeast).